A 624-amino-acid chain; its full sequence is Poly(A)-specific ribonuclease PARN (624 aa).

Asp28 and Glu30 together coordinate a divalent metal cation. The R3H domain occupies 171 to 238 (KKFIDQVIEK…ERHIVISKVD (68 aa)). Lys213 carries the post-translational modification N6-acetyllysine. A divalent metal cation contacts are provided by Asp285 and Asp375. Residue Lys492 is modified to N6-acetyllysine. Ser523 is subject to Phosphoserine. A Phosphoserine; by MAPKAPK2 modification is found at Ser543. The disordered stretch occupies residues 551 to 612 (GKRTLSPDPR…ELSLAGSVSD (62 aa)). The segment covering 567-579 (RESEEVSDSELEQ) has biased composition (acidic residues). A phosphoserine mark is found at Ser569, Ser573, and Ser575. Over residues 592–601 (KKSKKLKRMK) the composition is skewed to basic residues. A phosphoserine mark is found at Ser605, Ser609, and Ser613.

Belongs to the CAF1 family. In terms of assembly, homodimer. Found in a mRNA decay complex with RENT1, RENT2 and RENT3B. Interacts with KHSRP. Interacts with CELF1/CUGBP1. Interacts with ZC3HAV1 in an RNA-independent manner. Interacts with DHX36. Mg(2+) is required as a cofactor. In terms of processing, phosphorylation by MAPKAPK2, preventing GADD45A mRNA degradation after genotoxic stress.

Its subcellular location is the nucleus. The protein resides in the cytoplasm. It localises to the nucleolus. The enzyme catalyses Exonucleolytic cleavage of poly(A) to 5'-AMP.. 3'-exoribonuclease that has a preference for poly(A) tails of mRNAs, thereby efficiently degrading poly(A) tails. Exonucleolytic degradation of the poly(A) tail is often the first step in the decay of eukaryotic mRNAs and is also used to silence certain maternal mRNAs translationally during oocyte maturation and early embryonic development. Interacts with both the 3'-end poly(A) tail and the 5'-end cap structure during degradation, the interaction with the cap structure being required for an efficient degradation of poly(A) tails. Involved in nonsense-mediated mRNA decay, a critical process of selective degradation of mRNAs that contain premature stop codons. Also involved in degradation of inherently unstable mRNAs that contain AU-rich elements (AREs) in their 3'-UTR, possibly via its interaction with KHSRP. Probably mediates the removal of poly(A) tails of AREs mRNAs, which constitutes the first step of destabilization. Also able to recognize poly(A) tails of microRNAs such as MIR21 and H/ACA box snoRNAs (small nucleolar RNAs) leading to leading to microRNAs degradation or snoRNA increased stability. This Mus musculus (Mouse) protein is Poly(A)-specific ribonuclease PARN (Parn).